We begin with the raw amino-acid sequence, 634 residues long: UPF0329 protein ECU11_2090 (634 aa).

2 stretches are compositionally biased toward basic and acidic residues: residues 354 to 365 (REEREKREESKG) and 397 to 407 (GESKEEDRGEE). The interval 354–438 (REEREKREES…KGSGEKRISE (85 aa)) is disordered. Acidic residues predominate over residues 408-417 (GGVEAEDPLE).

Belongs to the UPF0329 family.

The sequence is that of UPF0329 protein ECU11_2090 from Encephalitozoon cuniculi (strain GB-M1) (Microsporidian parasite).